Here is a 104-residue protein sequence, read N- to C-terminus: NADH-quinone oxidoreductase subunit K (104 aa).

3 helical membrane passes run 4 to 24, 31 to 51, and 67 to 87; these read VPAS…LFGA, VIVL…LVAF, and LFTM…LIAL.

Belongs to the complex I subunit 4L family. In terms of assembly, NDH-1 is composed of 14 different subunits. Subunits NuoA, H, J, K, L, M, N constitute the membrane sector of the complex.

The protein resides in the cell membrane. The enzyme catalyses a quinone + NADH + 5 H(+)(in) = a quinol + NAD(+) + 4 H(+)(out). Its function is as follows. NDH-1 shuttles electrons from NADH, via FMN and iron-sulfur (Fe-S) centers, to quinones in the respiratory chain. The immediate electron acceptor for the enzyme in this species is believed to be a menaquinone. Couples the redox reaction to proton translocation (for every two electrons transferred, four hydrogen ions are translocated across the cytoplasmic membrane), and thus conserves the redox energy in a proton gradient. This Bacillus mycoides (strain KBAB4) (Bacillus weihenstephanensis) protein is NADH-quinone oxidoreductase subunit K.